The following is a 707-amino-acid chain: Nucleolin 2 (707 aa).

Positions Met-1–Thr-446 are disordered. Composition is skewed to basic and acidic residues over residues Arg-30–Val-40 and Thr-47–Lys-60. 3 stretches are compositionally biased toward acidic residues: residues Ser-75 to Glu-85, Ser-108 to Asp-120, and Asp-144 to Asp-153. Positions Lys-158–Ala-170 are enriched in low complexity. Acidic residues-rich tracts occupy residues Asp-219–Asp-232, Ser-248–Ala-263, and Glu-271–Asp-287. The segment covering Leu-300–Asp-311 has biased composition (basic and acidic residues). Over residues Glu-312–Asp-326 the composition is skewed to acidic residues. Over residues Ser-336–Lys-347 the composition is skewed to low complexity. Residues Ser-355 to Asp-370 are compositionally biased toward acidic residues. The span at Lys-376–Asp-394 shows a compositional bias: low complexity. Acidic residues predominate over residues Glu-395 to Asp-406. A compositionally biased stretch (basic and acidic residues) spans Glu-407–Thr-417. Over residues Ser-420–Lys-429 the composition is skewed to polar residues. Residues Lys-449–Glu-525 enclose the RRM 1 domain. Disordered regions lie at residues Gly-527–Ser-546 and Arg-629–Asp-707. In terms of domain architecture, RRM 2 spans Asn-549 to Pro-630. The span at Gly-657–His-681 shows a compositional bias: basic and acidic residues.

It is found in the nucleus. The protein localises to the nucleolus. In terms of biological role, involved in pre-rRNA processing and ribosome assembly. This Oryza sativa subsp. japonica (Rice) protein is Nucleolin 2.